A 115-amino-acid chain; its full sequence is Large ribosomal subunit protein bL19 (115 aa).

This sequence belongs to the bacterial ribosomal protein bL19 family.

Functionally, this protein is located at the 30S-50S ribosomal subunit interface and may play a role in the structure and function of the aminoacyl-tRNA binding site. In Sodalis glossinidius (strain morsitans), this protein is Large ribosomal subunit protein bL19.